We begin with the raw amino-acid sequence, 396 residues long: Elongation factor Tu (396 aa).

The tr-type G domain maps to 10–206 (KPHVNIGTIG…AVDESVPEPV (197 aa)). A G1 region spans residues 19–26 (GHVDHGKT). 19–26 (GHVDHGKT) contacts GTP. Thr26 lines the Mg(2+) pocket. The tract at residues 62–66 (GITIN) is G2. Positions 83-86 (DAPG) are G3. GTP-binding positions include 83 to 87 (DAPGH) and 138 to 141 (NKSD). Residues 138–141 (NKSD) form a G4 region. The tract at residues 176–178 (SGL) is G5.

The protein belongs to the TRAFAC class translation factor GTPase superfamily. Classic translation factor GTPase family. EF-Tu/EF-1A subfamily. In terms of assembly, monomer.

Its subcellular location is the cytoplasm. It catalyses the reaction GTP + H2O = GDP + phosphate + H(+). Functionally, GTP hydrolase that promotes the GTP-dependent binding of aminoacyl-tRNA to the A-site of ribosomes during protein biosynthesis. This Beutenbergia cavernae (strain ATCC BAA-8 / DSM 12333 / CCUG 43141 / JCM 11478 / NBRC 16432 / NCIMB 13614 / HKI 0122) protein is Elongation factor Tu.